We begin with the raw amino-acid sequence, 173 residues long: MHWKMLLLLLLYYNAEASMCHRWSRAVLFPAAHRPKRSSSLPLNPVLQTSLEEVELLYEFLLAELEISPDLQISIKDEELASLRKASDFRTVCNNVIPKSIPDIRRLSASLSSHPGILKKEDFERTVLTLAYTAYRTALSHGHQKDIWAQSLVSLFQALRHDLMRSSQPGVPP.

The signal sequence occupies residues 1–17; the sequence is MHWKMLLLLLLYYNAEA.

It belongs to the FAM180 family.

It is found in the secreted. The protein is Protein FAM180A (FAM180A) of Homo sapiens (Human).